The sequence spans 203 residues: Glycerol-3-phosphate acyltransferase (203 aa).

The next 4 membrane-spanning stretches (helical) occupy residues 6–26 (LTLLMIVAAYLAGSVSSAVLV), 82–102 (AISLGLIAIAACLGHIYPVFF), 118–138 (APIGDDLAICLMASWVVLVLI), and 141–161 (YSSLAAIITALLAPLYTWWLD).

It belongs to the PlsY family. As to quaternary structure, probably interacts with PlsX.

It is found in the cell inner membrane. It catalyses the reaction an acyl phosphate + sn-glycerol 3-phosphate = a 1-acyl-sn-glycero-3-phosphate + phosphate. Its pathway is lipid metabolism; phospholipid metabolism. Functionally, catalyzes the transfer of an acyl group from acyl-phosphate (acyl-PO(4)) to glycerol-3-phosphate (G3P) to form lysophosphatidic acid (LPA). This enzyme utilizes acyl-phosphate as fatty acyl donor, but not acyl-CoA or acyl-ACP. The chain is Glycerol-3-phosphate acyltransferase from Shewanella oneidensis (strain ATCC 700550 / JCM 31522 / CIP 106686 / LMG 19005 / NCIMB 14063 / MR-1).